The following is a 207-amino-acid chain: Redox-sensing transcriptional repressor Rex (207 aa).

The segment at residues 15–54 (LYYRCLNRLYEEGIEYVASKDIAERLGIKSSQVRKDLSYF) is a DNA-binding region (H-T-H motif). 89-94 (GAGNIG) provides a ligand contact to NAD(+).

Belongs to the transcriptional regulatory Rex family. In terms of assembly, homodimer.

The protein resides in the cytoplasm. In terms of biological role, modulates transcription in response to changes in cellular NADH/NAD(+) redox state. The polypeptide is Redox-sensing transcriptional repressor Rex (Thermosipho africanus (strain TCF52B)).